The chain runs to 628 residues: Probable alpha-L-arabinofuranosidase A (628 aa).

The first 25 residues, 1 to 25 (MVAFSALSGVSAVSLLLSLVQNAHG), serve as a signal peptide directing secretion. N-linked (GlcNAc...) asparagine glycans are attached at residues N36, N51, N74, N152, N171, N260, N359, N440, N493, and N610.

Belongs to the glycosyl hydrolase 51 family.

The protein resides in the secreted. It catalyses the reaction Hydrolysis of terminal non-reducing alpha-L-arabinofuranoside residues in alpha-L-arabinosides.. It participates in glycan metabolism; L-arabinan degradation. In terms of biological role, alpha-L-arabinofuranosidase involved in the degradation of arabinoxylan, a major component of plant hemicellulose. Acts only on small linear 1,5-alpha-linked L-arabinofuranosyl oligosaccharides. The chain is Probable alpha-L-arabinofuranosidase A (abfA) from Aspergillus niger (strain ATCC MYA-4892 / CBS 513.88 / FGSC A1513).